We begin with the raw amino-acid sequence, 312 residues long: Malate dehydrogenase (312 aa).

Residues Gly7–Gly13 and Asp34 contribute to the NAD(+) site. Substrate-binding residues include Arg81 and Arg87. Residues Asn94 and Ile117–Asn119 each bind NAD(+). The substrate site is built by Asn119 and Arg153. The active-site Proton acceptor is His177. Residue Met227 participates in NAD(+) binding.

This sequence belongs to the LDH/MDH superfamily. MDH type 1 family. As to quaternary structure, homodimer.

The catalysed reaction is (S)-malate + NAD(+) = oxaloacetate + NADH + H(+). Catalyzes the reversible oxidation of malate to oxaloacetate. This Cronobacter sakazakii (strain ATCC BAA-894) (Enterobacter sakazakii) protein is Malate dehydrogenase.